Reading from the N-terminus, the 209-residue chain is Uracil phosphoribosyltransferase (209 aa).

5-phospho-alpha-D-ribose 1-diphosphate contacts are provided by residues R79, R104, and 131 to 139 (DPMLATGNS). Uracil-binding positions include I194 and 199 to 201 (GDA). D200 contributes to the 5-phospho-alpha-D-ribose 1-diphosphate binding site.

The protein belongs to the UPRTase family. The cofactor is Mg(2+).

The catalysed reaction is UMP + diphosphate = 5-phospho-alpha-D-ribose 1-diphosphate + uracil. Its pathway is pyrimidine metabolism; UMP biosynthesis via salvage pathway; UMP from uracil: step 1/1. With respect to regulation, allosterically activated by GTP. Its function is as follows. Catalyzes the conversion of uracil and 5-phospho-alpha-D-ribose 1-diphosphate (PRPP) to UMP and diphosphate. This chain is Uracil phosphoribosyltransferase, found in Rhodococcus jostii (strain RHA1).